The primary structure comprises 300 residues: 1D-myo-inositol 2-acetamido-2-deoxy-alpha-D-glucopyranoside deacetylase (300 aa).

The Zn(2+) site is built by H13, D16, and H147.

The protein belongs to the MshB deacetylase family. The cofactor is Zn(2+).

The catalysed reaction is 1D-myo-inositol 2-acetamido-2-deoxy-alpha-D-glucopyranoside + H2O = 1D-myo-inositol 2-amino-2-deoxy-alpha-D-glucopyranoside + acetate. In terms of biological role, catalyzes the deacetylation of 1D-myo-inositol 2-acetamido-2-deoxy-alpha-D-glucopyranoside (GlcNAc-Ins) in the mycothiol biosynthesis pathway. This Mycobacterium avium (strain 104) protein is 1D-myo-inositol 2-acetamido-2-deoxy-alpha-D-glucopyranoside deacetylase.